The following is a 338-amino-acid chain: UPF0324 membrane protein HI_1643 (338 aa).

A run of 10 helical transmembrane segments spans residues 5–23 (PFYF…ANYL), 33–55 (HISA…YPQF), 62–84 (GVLF…RLTF), 94–116 (AVVT…GIRY), 123–145 (LVYL…AEPV), 155–177 (VAIA…FYTW), 222–239 (LRVM…WLLT), 254–273 (IPWF…FDLL), 280–302 (LFVE…TTQA), and 312–334 (PLVL…NYGI).

It belongs to the UPF0324 family.

The protein resides in the cell membrane. In Haemophilus influenzae (strain ATCC 51907 / DSM 11121 / KW20 / Rd), this protein is UPF0324 membrane protein HI_1643.